A 500-amino-acid chain; its full sequence is Lysine--tRNA ligase (500 aa).

Mg(2+)-binding residues include Glu407 and Glu414.

The protein belongs to the class-II aminoacyl-tRNA synthetase family. As to quaternary structure, homodimer. Requires Mg(2+) as cofactor.

The protein resides in the cytoplasm. The catalysed reaction is tRNA(Lys) + L-lysine + ATP = L-lysyl-tRNA(Lys) + AMP + diphosphate. The polypeptide is Lysine--tRNA ligase (Azobacteroides pseudotrichonymphae genomovar. CFP2).